The sequence spans 177 residues: Dihydrofolate reductase (177 aa).

The catalysed reaction is (6S)-5,6,7,8-tetrahydrofolate + NADP(+) = 7,8-dihydrofolate + NADPH + H(+). In terms of biological role, provides the tetrahydrofolates necessary for the synthesis of nucleotides and amino acids. Bacteriophage T5 induces high levels of dihydrofolate reductase in the host cell, probably for the viral replication. This is Dihydrofolate reductase from Escherichia phage T5 (Enterobacteria phage T5).